A 387-amino-acid polypeptide reads, in one-letter code: MEQGAEGLSQWPVAPHQFTEDTEKSLSFLDMSSSPGSGGVHTSWNRGPSGIRRVPQCPELERMSLASAQAPRQSACEMGQQFSMSPPEHGLSYCPQMTFTASQMVYSQGMSPSQPGMGAFKGAQAMPLGEPSISSVAVTFSGNLRMPPSGLPVSPPSGIPLMSHIGMPTMPYSGLPTVPFNGDALTPNMFLDPTMPPTEVQAVLPSLAQMLPSRDPQDFAMPPAGSPSLLPLESQGSFLSQPVSQEDFPKHHLCEPRREAQNSRAQERASGRSSPVSRPYHCEYENCGKAYTKRSHLVSHQRKHTGERPYKCTWEACTWSFFRSDELGRHTRIHTRYRPHKCDQCGRQFMRSDHLRQHQRTHMRMPRSPDPQADSGRRAGPLPAPHL.

3 disordered regions span residues 28-54, 213-234, and 257-277; these read FLDM…IRRV, SRDP…PLES, and RREA…SPVS. A compositionally biased stretch (polar residues) spans 30 to 46; that stretch reads DMSSSPGSGGVHTSWNR. Basic and acidic residues predominate over residues 257–270; it reads RREAQNSRAQERAS. 3 C2H2-type zinc fingers span residues 280 to 304, 310 to 334, and 340 to 362; these read YHCE…QRKH, YKCT…TRIH, and HKCD…QRTH. Residues 357-387 are disordered; that stretch reads QHQRTHMRMPRSPDPQADSGRRAGPLPAPHL.

This sequence belongs to the Sp1 C2H2-type zinc-finger protein family.

The protein resides in the nucleus. Functionally, transcription repressor that binds to the promoter of target genes and prevents their expression. Acts as a negative regulator of epithelial-mesenchymal transition and metastasis in breast cancer. Specifically binds the 5'-CACCC-3' sequence in the promoter of ID1, a key metastasis regulator in breast cancer, and repress its expression. May be a germ cell-specific transcription factor that plays important roles in spermatid differentiation and oocyte development. This chain is Krueppel-like factor 17 (KLF17), found in Sus scrofa (Pig).